A 211-amino-acid chain; its full sequence is Ribonuclease HII (211 aa).

Residues 16 to 205 (APVCGVDEAG…VKAALAAAAV (190 aa)) form the RNase H type-2 domain. A divalent metal cation-binding residues include Asp22, Glu23, and Asp114.

This sequence belongs to the RNase HII family. Mn(2+) serves as cofactor. It depends on Mg(2+) as a cofactor.

Its subcellular location is the cytoplasm. It catalyses the reaction Endonucleolytic cleavage to 5'-phosphomonoester.. Functionally, endonuclease that specifically degrades the RNA of RNA-DNA hybrids. The chain is Ribonuclease HII (rnhB) from Caulobacter vibrioides (strain ATCC 19089 / CIP 103742 / CB 15) (Caulobacter crescentus).